A 605-amino-acid polypeptide reads, in one-letter code: Arginine--tRNA ligase (605 aa).

The short motif at 131-141 (ANPTGPMHVGH) is the 'HIGH' region element. The disordered stretch occupies residues 290 to 309 (PPPKSKKGQPAPAQAASNSA). Over residues 298–309 (QPAPAQAASNSA) the composition is skewed to low complexity.

Belongs to the class-I aminoacyl-tRNA synthetase family. In terms of assembly, monomer.

It localises to the cytoplasm. It carries out the reaction tRNA(Arg) + L-arginine + ATP = L-arginyl-tRNA(Arg) + AMP + diphosphate. The sequence is that of Arginine--tRNA ligase from Anaeromyxobacter sp. (strain Fw109-5).